A 668-amino-acid polypeptide reads, in one-letter code: MTTLQTNKDPHLRGVSPNPSKIPVLSQRCQDFSSVKSRSLDQENQDPRTPAQKPPRSTQRQRPLTDTAGLRSKTLHQTEKSPSLKTLRNPLEELKPSSGGSNVGLVTHPQTEAIGAIEFVADPAALATILSGEGVKSCPQGYRSSLAQRVLVRERKGGTTQRGQSARSSAYLAPRIPTHQVGPARASCFSRLEGPGLRDHTLSPPRLEALNPPPGSSHSSTRPSLQELRRETCGGGRDGDCTDRRTSASQASRLLLKTPVQPASLPLRGEQEAVPHSDDGGGRHHLGLAQRIPLKESLTNTRSTYSSMKRFAIRRKAQFTPLRSLPKVQQAQWLSGLSPHSSPEEPALPWRQIAMKLFDQESRITLQKEPRKPSVASTSGPRPKRTPSHQELRIQRINILQQLLQQEVEGLAMGDGAPLNGGSAFDMTELKLPTAEISRTLTASEHNSGAALVGLSQHSGATEPLLSEECEEPQAYPEETKAAQPCSTTELKPPVPHRAEPELPEPCLPALSGPPLPSCRGQAEPPMACPRTEPGASAACALEAGTPESSTQPCCNQGPPATASLTFSSQSPVCASPSIHSLYPTGYSGPSSLAPRTLALRQRLRACLDTIHSFQEAHLDDECAFYTSRAPPPGPTRVFTNPVVTTLEWQDALRFVPIGPVVPQDSPS.

Disordered regions lie at residues 1-102, 154-177, and 189-285; these read MTTL…GGSN, ERKG…PRIP, and FSRL…GRHH. Residue serine 16 is modified to Phosphoserine. Polar residues-rich tracts occupy residues 27-37 and 55-64; these read QRCQDFSSVKS and PRSTQRQRPL. Residue serine 97 is modified to Phosphoserine. Over residues 158-168 the composition is skewed to polar residues; the sequence is GTTQRGQSARS. At serine 169 the chain carries Phosphoserine. Basic and acidic residues-rich tracts occupy residues 227-246 and 269-282; these read ELRR…DRRT and GEQE…DGGG. Residues serine 306, serine 324, and serine 338 each carry the phosphoserine modification. 2 disordered regions span residues 364 to 392 and 462 to 502; these read ITLQ…HQEL and TEPL…AEPE.

Directly binds bystin, and indirectly trophinin.

The protein resides in the cytoplasm. Could be involved with bystin and trophinin in a cell adhesion molecule complex that mediates an initial attachment of the blastocyst to uterine epithelial cells at the time of the embryo implantation. The chain is Tastin from Mus musculus (Mouse).